The chain runs to 119 residues: Large ribosomal subunit protein bL20 (119 aa).

The protein belongs to the bacterial ribosomal protein bL20 family.

Functionally, binds directly to 23S ribosomal RNA and is necessary for the in vitro assembly process of the 50S ribosomal subunit. It is not involved in the protein synthesizing functions of that subunit. The sequence is that of Large ribosomal subunit protein bL20 from Erythrobacter litoralis (strain HTCC2594).